The chain runs to 115 residues: Divalent-cation tolerance protein CutA (115 aa).

Cysteine 19, histidine 86, and histidine 87 together coordinate Cu cation.

The protein belongs to the CutA family. Homotrimer. Cu cation serves as cofactor.

It localises to the cytoplasm. Its function is as follows. Involved in resistance toward heavy metals. The sequence is that of Divalent-cation tolerance protein CutA from Citrobacter koseri (strain ATCC BAA-895 / CDC 4225-83 / SGSC4696).